A 493-amino-acid chain; its full sequence is WAS/WASL-interacting protein family member 1 (493 aa).

A compositionally biased stretch (pro residues) spans 1–14; the sequence is MPVPPPPAPPPPPT. Positions 1 to 493 are disordered; it reads MPVPPPPAPP…GAPPLPPIPR (493 aa). A compositionally biased stretch (polar residues) spans 21 to 31; the sequence is EKPTLNKTEQA. One can recognise a WH2 domain in the interval 32 to 49; the sequence is GRNALLSDISKGKKLKKT. An Asymmetric dimethylarginine modification is found at arginine 33. Positions 45–48 are binds actin; it reads KLKK. Gly residues predominate over residues 67 to 105; that stretch reads ASAGGYGGGGGGGGGGGGGGGGSGGNFGGGGPPGLGGLF. Arginine 126 and arginine 135 each carry omega-N-methylarginine. Composition is skewed to pro residues over residues 142-155, 162-175, and 183-195; these read FSPPSGPGRFPAPS, PPEPPRNRMPPPRP, and SLPPPVPNTPRPV. Phosphoserine is present on serine 143. Position 227 is a phosphoserine (serine 227). 3 stretches are compositionally biased toward pro residues: residues 239-248, 274-290, and 298-315; these read FPRPPLPPTP, VPPPPSQTSKPPVPSTP, and APPPPPPPSRPGPPPLPP. A phosphoserine mark is found at serine 330 and serine 340. Positions 336–361 are enriched in pro residues; that stretch reads PPLPSPGRSGPLPPPPSERPPPPVRD. XRSGPXPPXP motif repeat units lie at residues 342-351, 364-373, and 400-409; these read GRSGPLPPPP and PRSGPRPPLP. Positions 403–424 are enriched in pro residues; that stretch reads GPRPPLPPDRPGAGAPPPPPPS. Polar residues predominate over residues 425–434; that stretch reads TSVRNGFQDS. Over residues 470-484 the composition is skewed to basic and acidic residues; the sequence is ARNESRSGSNRRERG.

The protein belongs to the verprolin family. As to quaternary structure, binds to WAS within the N-terminal region, at a site distinct from the CDC42-binding site. Binds profilin and actin. Binds to WASL. Interacts with DBNL. Interacts with DBNL. Interacts with FNBP1L (via the SH3 domain).

Its subcellular location is the cytoplasmic vesicle. It localises to the cytoplasm. It is found in the cytoskeleton. The protein localises to the cell projection. The protein resides in the ruffle. Its function is as follows. Plays a role in the reorganization of the actin cytoskeleton. Contributes with NCK1 and GRB2 in the recruitment and activation of WASL. May participate in regulating the subcellular localization of WASL, resulting in the disassembly of stress fibers in favor of filopodia formation. Plays a role in the formation of cell ruffles. In Mus musculus (Mouse), this protein is WAS/WASL-interacting protein family member 1 (Wipf1).